We begin with the raw amino-acid sequence, 129 residues long: Small ribosomal subunit protein uS9 (129 aa).

Residues 98 to 129 (KAQGFLTRDPRKKERKKYGRKKARKSFQFSKR) form a disordered region. Residues 110 to 129 (KERKKYGRKKARKSFQFSKR) are compositionally biased toward basic residues.

The protein belongs to the universal ribosomal protein uS9 family.

This chain is Small ribosomal subunit protein uS9, found in Chlamydia trachomatis serovar L2 (strain ATCC VR-902B / DSM 19102 / 434/Bu).